The primary structure comprises 352 residues: Fatty acid desaturase (352 aa).

2 consecutive transmembrane segments (helical) span residues 28-48 and 55-75; these read SLIQ…LAYL and LLTL…FIIF. A Histidine box-1 motif is present at residues 76–80; the sequence is HDCCH. The chain crosses the membrane as a helical span at residues 89–109; it reads YNHILGFLTGVLTLFPYLQWQ. A Histidine box-2 motif is present at residues 112–116; sequence HSIHH. Transmembrane regions (helical) follow at residues 151–171, 186–206, and 209–229; these read LYRN…LITN, TYLT…IFGW, and FLLV…WLFY. A Histidine box-3 motif is present at residues 274–278; sequence HHVHH.

This sequence belongs to the fatty acid desaturase type 1 family.

It localises to the cell membrane. Its pathway is lipid metabolism; fatty acid metabolism. In terms of biological role, catalyzes the introduction of a cis-double bond at the delta(5) position of existing saturated fatty acids attached to membrane phospholipids. It is not strictly specific for palmitic acid (C16) but can also accept C14 as well as C18 species to yield unsaturated fatty acids. The polypeptide is Fatty acid desaturase (des) (Bacillus subtilis (strain 168)).